The sequence spans 649 residues: Threonine--tRNA ligase (649 aa).

The TGS domain occupies 1-60; the sequence is MHVTLPDGKQLDLQPGATALDAAKAIGPRLAQDALGATANGELTDLMTPLSDGASITLIT. The catalytic stretch occupies residues 248–544; sequence DHRKLGKELE…LIEHYAGDFP (297 aa). 3 residues coordinate Zn(2+): cysteine 341, histidine 392, and histidine 521.

This sequence belongs to the class-II aminoacyl-tRNA synthetase family. Homodimer. Zn(2+) is required as a cofactor.

It is found in the cytoplasm. The enzyme catalyses tRNA(Thr) + L-threonine + ATP = L-threonyl-tRNA(Thr) + AMP + diphosphate + H(+). Its function is as follows. Catalyzes the attachment of threonine to tRNA(Thr) in a two-step reaction: L-threonine is first activated by ATP to form Thr-AMP and then transferred to the acceptor end of tRNA(Thr). Also edits incorrectly charged L-seryl-tRNA(Thr). This chain is Threonine--tRNA ligase, found in Deinococcus radiodurans (strain ATCC 13939 / DSM 20539 / JCM 16871 / CCUG 27074 / LMG 4051 / NBRC 15346 / NCIMB 9279 / VKM B-1422 / R1).